Here is a 580-residue protein sequence, read N- to C-terminus: Acyl-coenzyme A synthetase ACSM4, mitochondrial (580 aa).

Residues 1–22 (MKVLLHCQRLRFIWLAKPAGRH) constitute a mitochondrion transit peptide. Residues 229 to 237 (TSGTTGSPK), 368 to 373 (EGYGQT), Asp-455, Arg-470, and Lys-566 contribute to the ATP site.

The protein belongs to the ATP-dependent AMP-binding enzyme family. Mg(2+) is required as a cofactor. Requires Mn(2+) as cofactor.

The protein resides in the mitochondrion. The catalysed reaction is a medium-chain fatty acid + ATP + CoA = a medium-chain fatty acyl-CoA + AMP + diphosphate. It catalyses the reaction hexanoate + ATP + CoA = hexanoyl-CoA + AMP + diphosphate. It carries out the reaction octanoate + ATP + CoA = octanoyl-CoA + AMP + diphosphate. The enzyme catalyses decanoate + ATP + CoA = decanoyl-CoA + AMP + diphosphate. The catalysed reaction is dodecanoate + ATP + CoA = dodecanoyl-CoA + AMP + diphosphate. Functionally, catalyzes the activation of fatty acids by CoA to produce an acyl-CoA, the first step in fatty acid metabolism. Capable of activating medium-chain fatty acids with a preference for C6-12 fatty acids. The sequence is that of Acyl-coenzyme A synthetase ACSM4, mitochondrial (Acsm4) from Mus musculus (Mouse).